A 312-amino-acid chain; its full sequence is sn-1-specific diacylglycerol lipase ABHD11 (312 aa).

Residues 1-14 (MITFKSFHCSRGWH) constitute a mitochondrion transit peptide. In terms of domain architecture, AB hydrolase-1 spans 62–297 (PPLVLLHGLF…GAGHWVHADK (236 aa)). Active-site charge relay system residues include S136, E232, and H291.

The protein belongs to the AB hydrolase superfamily. Post-translationally, phosphorylated.

Its subcellular location is the mitochondrion. It is found in the mitochondrion matrix. The catalysed reaction is 1-octadecanoyl-2-(5Z,8Z,11Z,14Z-eicosatetraenoyl)-sn-glycerol + H2O = 2-(5Z,8Z,11Z,14Z-eicosatetraenoyl)-glycerol + octadecanoate + H(+). It carries out the reaction a 1,2-diacyl-sn-glycerol + H2O = a 2-acylglycerol + a fatty acid + H(+). It catalyses the reaction a 1,3-diacyl-sn-glycerol + H2O = a 1-acyl-sn-glycerol + a fatty acid + H(+). The enzyme catalyses 1-octadecanoyl-2-(9Z-octadecenoyl)-sn-glycerol + H2O = 2-(9Z-octadecenoyl)-glycerol + octadecanoate + H(+). The catalysed reaction is 1-octadecanoyl-2-(4Z,7Z,10Z,13Z,16Z,19Z-docosahexaenoyl)-sn-glycerol + H2O = 2-(4Z,7Z,10Z,13Z,16Z,19Z-docosahexaenoyl)-glycerol + octadecanoate + H(+). It carries out the reaction 1,2-didecanoylglycerol + H2O = decanoylglycerol + decanoate + H(+). Its function is as follows. Catalyzes the hydrolysis of diacylglycerol in vitro and may function as a key regulator in lipid metabolism, namely by regulating the intracellular levels of diacylglycerol. 1,2-diacyl-sn-glycerols are the preferred substrate over 1,3-diacyl-sn-glycerols. The enzyme hydrolyzes stearate in preference to palmitate from the sn-1 position of 1,2-diacyl-sn-glycerols. The chain is sn-1-specific diacylglycerol lipase ABHD11 from Xenopus laevis (African clawed frog).